A 634-amino-acid polypeptide reads, in one-letter code: Chaperone protein dnaK2 (634 aa).

Threonine 197 carries the post-translational modification Phosphothreonine; by autocatalysis. Low complexity predominate over residues 601-623; it reads GAAAAESGADAGAAGAGDSSSGD. A disordered region spans residues 601-634; sequence GAAAAESGADAGAAGAGDSSSGDDVIDAEFTESK. Residues 624–634 are compositionally biased toward acidic residues; it reads DVIDAEFTESK.

Belongs to the heat shock protein 70 family.

Its function is as follows. Acts as a chaperone. The chain is Chaperone protein dnaK2 (dnaK2) from Prochlorococcus marinus (strain MIT 9313).